The chain runs to 168 residues: Endoribonuclease YbeY (168 aa).

Zn(2+)-binding residues include H127, H131, and H137.

This sequence belongs to the endoribonuclease YbeY family. Zn(2+) serves as cofactor.

It is found in the cytoplasm. Single strand-specific metallo-endoribonuclease involved in late-stage 70S ribosome quality control and in maturation of the 3' terminus of the 16S rRNA. The chain is Endoribonuclease YbeY from Chromobacterium violaceum (strain ATCC 12472 / DSM 30191 / JCM 1249 / CCUG 213 / NBRC 12614 / NCIMB 9131 / NCTC 9757 / MK).